The following is a 324-amino-acid chain: Transmembrane protein 171 (324 aa).

The next 4 helical transmembrane spans lie at 22–42 (IFCF…LSIF), 57–77 (MVLK…VILA), 113–133 (LIFG…GIWV), and 160–180 (FLSL…FFVV). Residues 229–239 (PESSASAVAES) show a composition bias toward low complexity. 2 disordered regions span residues 229 to 248 (PESS…LLPN) and 279 to 304 (YTIS…PPRY). Residues 279–291 (YTISGTNSSSEAS) are compositionally biased toward polar residues.

The protein localises to the membrane. In Homo sapiens (Human), this protein is Transmembrane protein 171 (TMEM171).